The chain runs to 60 residues: Large ribosomal subunit protein uL30 (60 aa).

It belongs to the universal ribosomal protein uL30 family. In terms of assembly, part of the 50S ribosomal subunit.

This chain is Large ribosomal subunit protein uL30, found in Carboxydothermus hydrogenoformans (strain ATCC BAA-161 / DSM 6008 / Z-2901).